A 148-amino-acid polypeptide reads, in one-letter code: Ubiquitin-conjugating enzyme E2-17 kDa (148 aa).

Residues 1–147 form the UBC core domain; that stretch reads MASKRILKEL…ARSWTQKYAM (147 aa). Cys-85 functions as the Glycyl thioester intermediate in the catalytic mechanism.

Belongs to the ubiquitin-conjugating enzyme family.

It catalyses the reaction S-ubiquitinyl-[E1 ubiquitin-activating enzyme]-L-cysteine + [E2 ubiquitin-conjugating enzyme]-L-cysteine = [E1 ubiquitin-activating enzyme]-L-cysteine + S-ubiquitinyl-[E2 ubiquitin-conjugating enzyme]-L-cysteine.. The protein operates within protein modification; protein ubiquitination. Its function is as follows. Catalyzes the covalent attachment of ubiquitin to other proteins. Mediates the selective degradation of short-lived and abnormal proteins. This chain is Ubiquitin-conjugating enzyme E2-17 kDa, found in Solanum lycopersicum (Tomato).